The primary structure comprises 227 residues: Claudin-15 (227 aa).

Residue M1 is a topological domain, cytoplasmic. The helical transmembrane segment at 2–24 (SVAVETFGFFMSALGLLMLGLTL) threads the bilayer. The Extracellular portion of the chain corresponds to 25-74 (SNSYWRVSTVHGNVITTNTIFENLWYSCATDSLGVSNCWDFPSMLALSGY). Residues C52 and C62 are joined by a disulfide bond. Residues 75–99 (VQGCRALMITAILLGFLGLFLGMVG) traverse the membrane as a helical segment. The Cytoplasmic segment spans residues 100–115 (LRCTNVGNMDLSKKAK). Phosphoserine is present on S111. Residues 116-140 (LLAIAGTLHILAGACGMVAISWYAV) traverse the membrane as a helical segment. Over 141–159 (NITTDFFNPLYAGTKYELG) the chain is Extracellular. The tract at residues 146 to 147 (FF) is important for the formation of tight-junction strand-like structures. A helical membrane pass occupies residues 160–182 (PALYLGWSASLLSILGGICVFST). Topologically, residues 183–227 (CCCSSKEEPATRAGLPYKPSTVVIPRATSDESDISFGKYGKNAYV) are cytoplasmic. Phosphoserine is present on residues S211, S214, and S217.

Belongs to the claudin family. In terms of assembly, can form homo- and heteropolymeric tight junction strands. Palmitoylated when heterogeneously expressed in S.frugiperda cells. Detected in duodenum, jejunum and ileum. Detected on intestinal villi and crypts (at protein level). Ubiquitous. Detected in small and large intestine, colon, jejunum, heart, kidney and lung.

It is found in the cell junction. The protein localises to the tight junction. It localises to the cell membrane. The enzyme catalyses Na(+)(in) = Na(+)(out). It catalyses the reaction K(+)(in) = K(+)(out). The catalysed reaction is Cs(+)(in) = Cs(+)(out). It carries out the reaction Rb(+)(in) = Rb(+)(out). The enzyme catalyses Li(+)(in) = Li(+)(out). It catalyses the reaction NH4(+)(in) = NH4(+)(out). The catalysed reaction is methylamine(out) = methylamine(in). It carries out the reaction H2O(in) = H2O(out). In terms of biological role, forms paracellular channels: polymerizes in tight junction strands with cation- and water-selective channels through the strands, conveying epithelial permeability in a process known as paracellular tight junction permeability. In intestinal epithelium, allows for sodium and water fluxes from the peritoneal side to the lumen of the intestine to regulate nutrient absorption and intestinal morphogenesis. The protein is Claudin-15 of Mus musculus (Mouse).